The chain runs to 116 residues: Flagellar transcriptional regulator FlhD (116 aa).

This sequence belongs to the FlhD family. Homodimer; disulfide-linked. Forms a heterohexamer composed of two FlhC and four FlhD subunits. Each FlhC binds a FlhD dimer, forming a heterotrimer, and a hexamer assembles by dimerization of two heterotrimers.

The protein localises to the cytoplasm. In terms of biological role, functions in complex with FlhC as a master transcriptional regulator that regulates transcription of several flagellar and non-flagellar operons by binding to their promoter region. Activates expression of class 2 flagellar genes, including fliA, which is a flagellum-specific sigma factor that turns on the class 3 genes. Also regulates genes whose products function in a variety of physiological pathways. The sequence is that of Flagellar transcriptional regulator FlhD from Proteus mirabilis (strain HI4320).